We begin with the raw amino-acid sequence, 274 residues long: Factor H binding protein (274 aa).

Positions 1–19 (MNRTAFCCLSLTTALILTA) are cleaved as a signal peptide. The N-palmitoyl cysteine moiety is linked to residue cysteine 20. A lipid anchor (S-diacylglycerol cysteine) is attached at cysteine 20. The interval 27-119 (VAADIGAGLA…LESGEFQVYK (93 aa)) is domain A. Residues 120–183 (QSHSALTAFQ…TAFGSDDAGG (64 aa)) are domain B. Residues 184–274 (KLTYTIDFAA…IRHIGLAAKQ (91 aa)) are domain C.

The protein belongs to the factor H binding-protein family. As to quaternary structure, binds to host factor H (fH from human). Both fHbp beta-barrels contact Sushi domains 6 and 7 in fH (also called complement control protein domains, CCP). This interaction probably mimics the normal (carbohydrate-dependent) mode of fH recruitement, regulating fH activity. Sucrose octasulphate inhibits the fHbp-fH interaction. Post-translationally, protein is lipidated in N.meningitidis upon growth in radioactive palmitic acid, probably on Cys-20.

It is found in the cell outer membrane. The protein resides in the secreted. It localises to the extracellular vesicle. Its subcellular location is the bacterial extracellular vesicle. In terms of biological role, a bacterial surface lipoprotein that binds host (human) complement factor H (fH, gene CFH), binding contributes to the avoidance of complement-mediated lysis by N.meningitidis. Binding of fH to the bacteria surface is independent of bacterial sialic acid moieties. fH binding affinity is high enough that it may sequester plasma fH, depleting its circulating levels and de-regulating complement in the host. This protein induces high levels of bactericidal antibodies in mice. This chain is Factor H binding protein (fhbP), found in Neisseria meningitidis serogroup B (strain ATCC BAA-335 / MC58).